The following is a 539-amino-acid chain: Bifunctional purine biosynthesis protein PurH (539 aa).

The 152-residue stretch at 8-159 (FPIPDLHRVR…KNYAYTGVVT (152 aa)) folds into the MGS-like domain.

This sequence belongs to the PurH family.

The catalysed reaction is (6R)-10-formyltetrahydrofolate + 5-amino-1-(5-phospho-beta-D-ribosyl)imidazole-4-carboxamide = 5-formamido-1-(5-phospho-D-ribosyl)imidazole-4-carboxamide + (6S)-5,6,7,8-tetrahydrofolate. It catalyses the reaction IMP + H2O = 5-formamido-1-(5-phospho-D-ribosyl)imidazole-4-carboxamide. Its pathway is purine metabolism; IMP biosynthesis via de novo pathway; 5-formamido-1-(5-phospho-D-ribosyl)imidazole-4-carboxamide from 5-amino-1-(5-phospho-D-ribosyl)imidazole-4-carboxamide (10-formyl THF route): step 1/1. The protein operates within purine metabolism; IMP biosynthesis via de novo pathway; IMP from 5-formamido-1-(5-phospho-D-ribosyl)imidazole-4-carboxamide: step 1/1. This Bartonella tribocorum (strain CIP 105476 / IBS 506) protein is Bifunctional purine biosynthesis protein PurH.